A 385-amino-acid polypeptide reads, in one-letter code: Glutamate 5-kinase (385 aa).

Lys17 is an ATP binding site. Substrate contacts are provided by Ser64, Asp151, and Asn165. 185 to 186 (SD) contributes to the ATP binding site. One can recognise a PUA domain in the interval 291–367 (SGTVRVDAGA…NQIDNILGYN (77 aa)).

Belongs to the glutamate 5-kinase family.

Its subcellular location is the cytoplasm. The enzyme catalyses L-glutamate + ATP = L-glutamyl 5-phosphate + ADP. It functions in the pathway amino-acid biosynthesis; L-proline biosynthesis; L-glutamate 5-semialdehyde from L-glutamate: step 1/2. In terms of biological role, catalyzes the transfer of a phosphate group to glutamate to form L-glutamate 5-phosphate. The sequence is that of Glutamate 5-kinase from Methanosarcina acetivorans (strain ATCC 35395 / DSM 2834 / JCM 12185 / C2A).